The following is a 1079-amino-acid chain: Electrogenic sodium bicarbonate cotransporter 1 (1079 aa).

Residues 1-62 (MEDEAVLDRG…EKREKERISE (62 aa)) are required for interaction with AHCYL1. Residues 1 to 466 (MEDEAVLDRG…FASDFYDALN (466 aa)) lie on the Cytoplasmic side of the membrane. Y30 is modified (phosphotyrosine). Residues 39–52 (YRRRRRHKRKTGHK) show a composition bias toward basic residues. The interval 39–78 (YRRRRRHKRKTGHKEKREKERISENYSDKSDVENADESSS) is disordered. T49 carries the phosphothreonine; by PKA modification. A compositionally biased stretch (basic and acidic residues) spans 53 to 70 (EKREKERISENYSDKSDV). Residues S61, S65, S68, S223, S232, S233, and S245 each carry the phosphoserine modification. A disordered region spans residues 237-265 (MFTSPDNGSPAMTHRNLTSSSLNDISDKP). 2 positions are modified to phosphothreonine: T249 and T254. Over residues 251-260 (RNLTSSSLND) the composition is skewed to polar residues. A phosphoserine mark is found at S256, S257, and S262. Residues 467–491 (IQSLSAILFIYLATVTNAITFGGLL) form a helical membrane-spanning segment. Residues 492 to 501 (GDATDNMQGV) lie on the Extracellular side of the membrane. The chain crosses the membrane as a helical span at residues 502–520 (LESFLGTAVSGAIFCLFAG). Position 521 (Q521) is a topological domain, cytoplasmic. Residues 522–542 (PLTILSSTGPVLVFERLLFNF) traverse the membrane as a discontinuously helical segment. Topologically, residues 543–550 (SKDHNFDY) are extracellular. A helical membrane pass occupies residues 551 to 571 (LEFRLWIGLWSAFLCLILVAT). Topologically, residues 572-585 (DASFLVQYFTRFTE) are cytoplasmic. A helical membrane pass occupies residues 586–609 (EGFSSLISFIFIYDAFKKMIKLAD). The Extracellular portion of the chain corresponds to 610 to 692 (YYPINSDFKV…GNNCNFVPDV (83 aa)). Residues 693–710 (TLMSFILFLGTYTSSMAL) traverse the membrane as a helical segment. Over 711 to 725 (KKFKTSRYFPTTARK) the chain is Cytoplasmic. Residues 726–745 (LISDFAIILSILIFCVIDAL) traverse the membrane as a helical segment. The Extracellular segment spans residues 746 to 779 (VGVDTPKLIVPSEFKPTSPNRGWFVPPFGGNPWW). Residues 748-779 (VDTPKLIVPSEFKPTSPNRGWFVPPFGGNPWW) form an interaction with CA4 region. A helical transmembrane segment spans residues 780–807 (VYLAAAIPALLVTILIFMDQQITAVIVN). Residues 808–819 (RKEHKLKKGAGY) are Cytoplasmic-facing. A helical membrane pass occupies residues 820 to 836 (HLDLFWVAILMVVCSFM). Position 837 (A837) is a topological domain, extracellular. The chain crosses the membrane as a discontinuously helical span at residues 838 to 855 (LPWYVAATVISIAHIDSL). Residues 856-877 (KMETETSAPGEQPKFLGVREQR) lie on the Cytoplasmic side of the membrane. The helical transmembrane segment at 878–894 (VTGTLVFILTGLSVFMA) threads the bilayer. The Extracellular portion of the chain corresponds to 895 to 901 (PILKFIP). The helical transmembrane segment at 902-918 (MPVLYGVFLYMGVASLN) threads the bilayer. Topologically, residues 919-960 (GVQFMDRLKLLLMPLKHQPDFIYLRHVPLRRVHLFTFLQVLC) are cytoplasmic. Positions 961–986 (LALLWILKSTVAAIIFPVMILALVAV) form an intramembrane region, discontinuously helical. At 987 to 1079 (RKGMDYLFSQ…STFLERHTSC (93 aa)) the chain is on the cytoplasmic side. The segment at 1002-1004 (LDD) is CA2-binding. The tract at residues 1012–1079 (KKKEDEKKKK…STFLERHTSC (68 aa)) is disordered. S1026 carries the post-translational modification Phosphoserine; by PKA. S1029 is subject to Phosphoserine. A CA2-binding region spans residues 1030-1033 (DNDD). S1034 and S1044 each carry phosphoserine. Residues 1057–1059 (FLS) form a required for basolateral targeting region. Over residues 1062-1079 (KPSDREKSSTFLERHTSC) the composition is skewed to basic and acidic residues. S1069 is modified (phosphoserine).

Belongs to the anion exchanger (TC 2.A.31) family. In terms of assembly, homodimer. Interacts with CA2/carbonic anhydrase 2 and CA4/carbonic anhydrase 4 which may regulate transporter activity. Isoform 1 but not isoform 2 interacts with AHCYL1 (via PEST domain when phosphorylated); the interaction increases SLC4A4 isoform 1 activity. Interacts with AHCYL2. Post-translationally, phosphorylation of Ser-1026 by PKA increases the binding of CA2 and changes the Na(+):HCO3(-) stoichiometry of the transporter from 3:1 to 2:1. Phosphorylated in presence of STK39 and dephosphorylated in presence of PP1 phosphatase; phosphorylation seems to inhibit SLC4A4 activity. In terms of processing, N-glycosylated. May not be necessary for the transporter basic functions. In terms of tissue distribution, expressed in colonic mucosa, kidney cortex and to gastric mucosa.

The protein resides in the basolateral cell membrane. It localises to the cell membrane. The catalysed reaction is 2 hydrogencarbonate(out) + Na(+)(out) = 2 hydrogencarbonate(in) + Na(+)(in). The enzyme catalyses 3 hydrogencarbonate(out) + Na(+)(out) = 3 hydrogencarbonate(in) + Na(+)(in). Functionally, electrogenic sodium/bicarbonate cotransporter with a Na(+):HCO3(-) stoichiometry varying from 1:2 to 1:3. May regulate bicarbonate influx/efflux at the basolateral membrane of cells and regulate intracellular pH. The polypeptide is Electrogenic sodium bicarbonate cotransporter 1 (SLC4A4) (Oryctolagus cuniculus (Rabbit)).